Reading from the N-terminus, the 1134-residue chain is RNA-binding protein NAB6 (1134 aa).

An N-acetylserine modification is found at Ser-2. Disordered regions lie at residues 112 to 133 (RPVSNHNGYNGNSNSNQNNTNN), 151 to 173 (RNNNSTRNVTHNNNKGCDTRNNS), and 464 to 491 (SVPSVTAGNNNDSNNNGNNNKSNMSGIT). Composition is skewed to low complexity over residues 115–133 (SNHNGYNGNSNSNQNNTNN) and 151–164 (RNNNSTRNVTHNNN). Ser-464 and Ser-467 each carry phosphoserine. Residues 471-489 (GNNNDSNNNGNNNKSNMSG) show a composition bias toward low complexity. One can recognise an RRM domain in the interval 653–726 (RTIYIGNINP…NMLRVGWGHY (74 aa)). Disordered stretches follow at residues 918–959 (LDAH…FGGL) and 1043–1092 (NYRS…GSFA). The segment covering 1057 to 1081 (STLSYNHSKNNETPMQDIFTNGETA) has biased composition (polar residues). Residues 1083-1092 (NRKKKRGSFA) are compositionally biased toward basic residues.

It localises to the cytoplasm. Its function is as follows. RNA-binding protein that associates with mRNAs encoding cell wall proteins. This Saccharomyces cerevisiae (strain ATCC 204508 / S288c) (Baker's yeast) protein is RNA-binding protein NAB6 (NAB6).